Here is a 205-residue protein sequence, read N- to C-terminus: Glycerol-3-phosphate acyltransferase (205 aa).

Transmembrane regions (helical) follow at residues 4 to 24 (IAPGMILLAYLCGSISSAILV), 80 to 100 (PFWLGLIAIAACLGHIWPIFF), 112 to 132 (FGAIAPIGWDLTGVMAGTWLL), and 138 to 158 (GYSSLGAIVSALVAPFYVWWF).

The protein belongs to the PlsY family. As to quaternary structure, probably interacts with PlsX.

The protein localises to the cell inner membrane. The catalysed reaction is an acyl phosphate + sn-glycerol 3-phosphate = a 1-acyl-sn-glycero-3-phosphate + phosphate. The protein operates within lipid metabolism; phospholipid metabolism. In terms of biological role, catalyzes the transfer of an acyl group from acyl-phosphate (acyl-PO(4)) to glycerol-3-phosphate (G3P) to form lysophosphatidic acid (LPA). This enzyme utilizes acyl-phosphate as fatty acyl donor, but not acyl-CoA or acyl-ACP. In Cronobacter sakazakii (strain ATCC BAA-894) (Enterobacter sakazakii), this protein is Glycerol-3-phosphate acyltransferase.